The following is a 128-amino-acid chain: Protein ripply2 (128 aa).

The interval 1–64 (MDTTESAESA…ALPSGPGMAE (64 aa)) is disordered. The span at 17–28 (PSRSRCPPSAQP) shows a compositional bias: low complexity. The short motif at 34–37 (WRPW) is the WRPW motif element. Residues 74–109 (HPVRLFWPKSKCYDYLYQEAETLLKNFPIQATISFY) form a ripply homology domain region.

This sequence belongs to the ripply family. Expressed in the embryonic anterior presomitic mesoderm. First expressed in S-I at 8.5 dpc, where expression is maintained until 13.5 dpc, with an additional stripe of expression sometimes seen in the rostral part of S0 and S-I.

Its subcellular location is the nucleus. Its function is as follows. Plays a role in somitogenesis. Required for somite segregation and establishment of rostrocaudal polarity in somites. In Mus musculus (Mouse), this protein is Protein ripply2.